Here is a 770-residue protein sequence, read N- to C-terminus: Integrin beta-2 (770 aa).

Positions 1-22 are cleaved as a signal peptide; the sequence is MLPQRPQLLLLAGLLSLQSVLS. Q23 bears the Pyrrolidone carboxylic acid mark. Over 23–701 the chain is Extracellular; that stretch reads QECTKYKVST…DMLECVKGPN (679 aa). Positions 24–74 constitute a PSI domain; it reads ECTKYKVSTCRDCIESGPSCAWCQKLNFTGQGEPDSTRCDTRAQLLSKGCP. Cystine bridges form between C25-C43, C33-C447, C36-C62, C46-C73, C191-C198, C246-C286, C386-C400, C420-C445, C449-C467, C459-C470, C472-C481, C483-C514, C497-C512, C506-C517, C519-C534, C536-C559, C541-C557, C549-C562, C564-C573, C575-C598, C582-C596, C590-C601, C603-C612, C615-C618, C622-C663, C628-C647, C631-C643, and C671-C696. N-linked (GlcNAc...) asparagine glycosylation is found at N50 and N116. Residues 124–363 enclose the VWFA domain; sequence GYPIDLYYLM…ELIKSAYNKL (240 aa). S136 and S138 together coordinate Mg(2+). Residues S138, D141, D142, and D173 each coordinate Ca(2+). N229, D231, P233, and E234 together coordinate Ca(2+). E234 is a Mg(2+) binding site. N254 carries an N-linked (GlcNAc...) asparagine glycan. Ca(2+)-binding residues include D264 and E347. Positions 397–399 match the Cell attachment site motif; sequence RGD. 4 I-EGF domains span residues 449–482, 483–535, 536–574, and 575–613; these read CREA…KNCE, CQTH…QFCE, CDNV…SACQ, and CLKS…PLCI. N501 is a glycosylation site (N-linked (GlcNAc...) asparagine). Residue N642 is glycosylated (N-linked (GlcNAc...) asparagine). A helical membrane pass occupies residues 702 to 724; it reads IAAIVGGTVGGVVLVGILLLAIW. Over 725-770 the chain is Cytoplasmic; that stretch reads KALTHLSDLREYHRFEKEKLKSQWNNDNPLFKSATTTVMNPKFAES. Residues S746 and S757 each carry the phosphoserine modification. Residues T759 and T761 each carry the phosphothreonine modification.

Belongs to the integrin beta chain family. Heterodimer of an alpha and a beta subunit. The ITGB2 beta subunit associates with the ITGAL, ITGAM, ITGAX or ITGAD alpha subunits. Found in a complex with CD177 and ITGAM/CD11b. Interacts with FGR. Interacts with COPS5 and RANBP9. Interacts with FLNA (via filamin repeats 4, 9, 12, 17, 19, 21, and 23). Interacts with THBD. In terms of processing, both Ser-746 and Ser-757 become phosphorylated when T-cells are exposed to phorbol esters. Phosphorylation on Thr-759 (but not on Ser-757) allows interaction with 14-3-3 proteins.

It is found in the cell membrane. Its subcellular location is the membrane raft. In terms of biological role, integrin ITGAL/ITGB2 is a receptor for ICAM1, ICAM2, ICAM3 and ICAM4. Integrin ITGAL/ITGB2 is also a receptor for the secreted form of ubiquitin-like protein ISG15; the interaction is mediated by ITGAL. Integrins ITGAM/ITGB2 and ITGAX/ITGB2 are receptors for the iC3b fragment of the third complement component and for fibrinogen. Integrin ITGAX/ITGB2 recognizes the sequence G-P-R in fibrinogen alpha-chain. Integrin ITGAM/ITGB2 recognizes P1 and P2 peptides of fibrinogen gamma chain. Integrin ITGAM/ITGB2 is also a receptor for factor X. Integrin ITGAD/ITGB2 is a receptor for ICAM3 and VCAM1. Contributes to natural killer cell cytotoxicity. Involved in leukocyte adhesion and transmigration of leukocytes including T-cells and neutrophils. Triggers neutrophil transmigration during lung injury through PTK2B/PYK2-mediated activation. Integrin ITGAL/ITGB2 in association with ICAM3, contributes to apoptotic neutrophil phagocytosis by macrophages. In association with alpha subunit ITGAM/CD11b, required for CD177-PRTN3-mediated activation of TNF primed neutrophils. This Ovis canadensis (Bighorn sheep) protein is Integrin beta-2 (ITGB2).